A 229-amino-acid polypeptide reads, in one-letter code: MSQPRPLLSPPETEEQLLAQAQQLSGYTLGELAALAGLVTPENLKRDKGWIGVLLEIWLGASAGSKPEQDFAALGVELKTIPVDSLGRPLETTFVCVAPLTGNSGVTWETSHVRHKLKRVLWIPVEGERSIPLAQRRVGSPLLWSPNEEEDRQLREDWEELMDMIVLGQVERITARHGEYLQIRPKAANAKALTEAIGVRGERILTLPRGFYLKKNFTSALLARHFLIQ.

The protein belongs to the MutH family.

It localises to the cytoplasm. Sequence-specific endonuclease that cleaves unmethylated GATC sequences. It is involved in DNA mismatch repair. The sequence is that of DNA mismatch repair protein MutH from Escherichia coli (strain SMS-3-5 / SECEC).